The sequence spans 653 residues: Chaperone protein dnaK3 (653 aa).

Thr-197 bears the Phosphothreonine; by autocatalysis mark.

Belongs to the heat shock protein 70 family.

Functionally, acts as a chaperone. The sequence is that of Chaperone protein dnaK3 (dnaK3) from Nostoc sp. (strain PCC 7120 / SAG 25.82 / UTEX 2576).